Consider the following 307-residue polypeptide: Putative S-adenosyl-L-methionine-dependent methyltransferase Mflv_5025 (307 aa).

S-adenosyl-L-methionine contacts are provided by residues Asp-130 and 159–160 (DL).

Belongs to the UPF0677 family.

Its function is as follows. Exhibits S-adenosyl-L-methionine-dependent methyltransferase activity. In Mycolicibacterium gilvum (strain PYR-GCK) (Mycobacterium gilvum (strain PYR-GCK)), this protein is Putative S-adenosyl-L-methionine-dependent methyltransferase Mflv_5025.